The following is a 449-amino-acid chain: Probable rhamnogalacturonase E (449 aa).

Positions 1-21 (MRSKTFSVLSSCLLLIATVQG) are cleaved as a signal peptide. A disulfide bridge connects residues Cys42 and Cys68. Residues Asn53, Asn91, and Asn106 are each glycosylated (N-linked (GlcNAc...) asparagine). Catalysis depends on Asp221, which acts as the Proton donor. The cysteines at positions 223 and 240 are disulfide-linked. Residues Asn241 and Asn256 are each glycosylated (N-linked (GlcNAc...) asparagine). His296 is a catalytic residue. An N-linked (GlcNAc...) asparagine glycan is attached at Asn323. 2 disulfides stabilise this stretch: Cys346–Cys352 and Cys374–Cys383.

The protein belongs to the glycosyl hydrolase 28 family.

The protein localises to the secreted. The enzyme catalyses Endohydrolysis of alpha-D-GalA-(1-&gt;2)-alpha-L-Rha glycosidic bond in the rhamnogalacturonan I backbone with initial inversion of anomeric configuration releasing oligosaccharides with beta-D-GalA at the reducing end.. Pectinolytic enzymes consist of four classes of enzymes: pectine lyase, polygalacturonase, pectin methylesterase and rhamnogalacturonase. Hydrolyzes alpha-D-galacturonopyranosyl-(1,2)-alpha-L-rhamnopyranosyl linkages in the backbone of the hairy regions of pectins. The protein is Probable rhamnogalacturonase E (rhgE) of Aspergillus flavus (strain ATCC 200026 / FGSC A1120 / IAM 13836 / NRRL 3357 / JCM 12722 / SRRC 167).